The following is a 592-amino-acid chain: Aspartate--tRNA(Asp/Asn) ligase (592 aa).

Glu175 lines the L-aspartate pocket. Residues 199–202 (QLFK) form an aspartate region. Arg221 provides a ligand contact to L-aspartate. Residues 221 to 223 (RDE) and Gln230 each bind ATP. His447 serves as a coordination point for L-aspartate. ATP is bound at residue Glu481. Arg488 contributes to the L-aspartate binding site. An ATP-binding site is contributed by 533-536 (GIDR).

This sequence belongs to the class-II aminoacyl-tRNA synthetase family. Type 1 subfamily. As to quaternary structure, homodimer.

The protein localises to the cytoplasm. It catalyses the reaction tRNA(Asx) + L-aspartate + ATP = L-aspartyl-tRNA(Asx) + AMP + diphosphate. Aspartyl-tRNA synthetase with relaxed tRNA specificity since it is able to aspartylate not only its cognate tRNA(Asp) but also tRNA(Asn). Reaction proceeds in two steps: L-aspartate is first activated by ATP to form Asp-AMP and then transferred to the acceptor end of tRNA(Asp/Asn). In Dictyoglomus turgidum (strain DSM 6724 / Z-1310), this protein is Aspartate--tRNA(Asp/Asn) ligase.